A 788-amino-acid chain; its full sequence is Bifunctional purine biosynthetic protein ADE1 (788 aa).

The segment at 1–430 is GARS; that stretch reads MEPIIALLIG…DIAHHALNPK (430 aa). The ATP-grasp domain maps to 115–321; that stretch reads KDFMHRNNIP…LAEIILACVN (207 aa). 141–202 contributes to the ATP binding site; sequence LDTCTFDVVI…EELLEGEELS (62 aa). E291 and N293 together coordinate Mg(2+). Residues 437-769 form an AIRS region; the sequence is LTYENSGVSV…TVYRIGQLVD (333 aa).

The protein in the N-terminal section; belongs to the GARS family. This sequence in the C-terminal section; belongs to the AIR synthase family. Mg(2+) serves as cofactor. The cofactor is Mn(2+).

Its subcellular location is the cytoplasm. It localises to the cytosol. It carries out the reaction 5-phospho-beta-D-ribosylamine + glycine + ATP = N(1)-(5-phospho-beta-D-ribosyl)glycinamide + ADP + phosphate + H(+). The catalysed reaction is 2-formamido-N(1)-(5-O-phospho-beta-D-ribosyl)acetamidine + ATP = 5-amino-1-(5-phospho-beta-D-ribosyl)imidazole + ADP + phosphate + H(+). It participates in purine metabolism; IMP biosynthesis via de novo pathway; 5-amino-1-(5-phospho-D-ribosyl)imidazole from N(2)-formyl-N(1)-(5-phospho-D-ribosyl)glycinamide: step 2/2. The protein operates within purine metabolism; IMP biosynthesis via de novo pathway; N(1)-(5-phospho-D-ribosyl)glycinamide from 5-phospho-alpha-D-ribose 1-diphosphate: step 2/2. Functionally, catalyzes the second and fifth step in the 'de novo' purine biosynthesis pathway; contains phosphoribosylamine--glycine ligase (GARS) and phosphoribosylformylglycinamidine cyclo-ligase (AIRS) activities. The protein is Bifunctional purine biosynthetic protein ADE1 of Schizosaccharomyces pombe (strain 972 / ATCC 24843) (Fission yeast).